The primary structure comprises 279 residues: Tryptophan synthase alpha chain (279 aa).

Active-site proton acceptor residues include Glu50 and Asp61.

This sequence belongs to the TrpA family. Tetramer of two alpha and two beta chains.

It carries out the reaction (1S,2R)-1-C-(indol-3-yl)glycerol 3-phosphate + L-serine = D-glyceraldehyde 3-phosphate + L-tryptophan + H2O. The protein operates within amino-acid biosynthesis; L-tryptophan biosynthesis; L-tryptophan from chorismate: step 5/5. In terms of biological role, the alpha subunit is responsible for the aldol cleavage of indoleglycerol phosphate to indole and glyceraldehyde 3-phosphate. The protein is Tryptophan synthase alpha chain of Brucella abortus (strain S19).